A 173-amino-acid chain; its full sequence is Tumor necrosis factor ligand superfamily member 18 (173 aa).

The Cytoplasmic segment spans residues 1-20; it reads MEEMPLRESSPQRAERCKKS. Residues 21–41 form a helical; Signal-anchor for type II membrane protein membrane-spanning segment; that stretch reads WLLCIVALLLMLLCSLGTLIY. Positions 40-166 constitute a THD domain; sequence IYTSLKPTAI…TNTYWGIILM (127 aa). Residues 42–173 lie on the Extracellular side of the membrane; the sequence is TSLKPTAIES…ILMPDLPFIS (132 aa). Cysteines 52 and 72 form a disulfide. Residue Asn74 is glycosylated (N-linked (GlcNAc...) asparagine).

The protein belongs to the tumor necrosis factor family. As to quaternary structure, homotrimer. Homodimer. Post-translationally, N-glycosylated. Detected in immature and mature dendritic cells and in macrophages (at protein level). Detected in spleen, lung, heart, thymus, monocytes, macrophages, B-cells and dendritic cells.

The protein localises to the cell membrane. In terms of biological role, cytokine that binds to TNFRSF18/AITR/GITR. Regulates T-cell responses. Can function as costimulator and lower the threshold for T-cell activation and T-cell proliferation. Important for interactions between activated T-lymphocytes and endothelial cells. Mediates activation of NF-kappa-B. Triggers increased phosphorylation of STAT1 and up-regulates expression of VCAM1 and ICAM1. Promotes leukocyte adhesion to endothelial cells. Regulates migration of monocytes from the splenic reservoir to sites of inflammation. This Mus musculus (Mouse) protein is Tumor necrosis factor ligand superfamily member 18 (Tnfsf18).